We begin with the raw amino-acid sequence, 190 residues long: Peptidyl-prolyl cis-trans isomerase A (190 aa).

The N-terminal stretch at 1–23 is a signal peptide; that stretch reads MSKRILAAVVTVLSLTAFSPAFA. A PPIase cyclophilin-type domain is found at 26–187; the sequence is TSTHVLLTTS…KPIVIQSAKI (162 aa).

The protein belongs to the cyclophilin-type PPIase family.

The protein localises to the periplasm. It carries out the reaction [protein]-peptidylproline (omega=180) = [protein]-peptidylproline (omega=0). In terms of biological role, PPIases accelerate the folding of proteins. It catalyzes the cis-trans isomerization of proline imidic peptide bonds in oligopeptides. This is Peptidyl-prolyl cis-trans isomerase A (rotA) from Dickeya dadantii (strain 3937) (Erwinia chrysanthemi (strain 3937)).